The chain runs to 476 residues: Bifunctional protein HldE (476 aa).

The ribokinase stretch occupies residues 1-318; it reads MKPILPDYNN…AEAIHGSRDT (318 aa). An ATP-binding site is contributed by 195–198; the sequence is NMSE. Asp-264 is an active-site residue. The tract at residues 344–476 is cytidylyltransferase; sequence MTNGCFDILH…IIDAIKGGRG (133 aa).

The protein in the N-terminal section; belongs to the carbohydrate kinase PfkB family. It in the C-terminal section; belongs to the cytidylyltransferase family. In terms of assembly, homodimer.

It catalyses the reaction D-glycero-beta-D-manno-heptose 7-phosphate + ATP = D-glycero-beta-D-manno-heptose 1,7-bisphosphate + ADP + H(+). It carries out the reaction D-glycero-beta-D-manno-heptose 1-phosphate + ATP + H(+) = ADP-D-glycero-beta-D-manno-heptose + diphosphate. It functions in the pathway nucleotide-sugar biosynthesis; ADP-L-glycero-beta-D-manno-heptose biosynthesis; ADP-L-glycero-beta-D-manno-heptose from D-glycero-beta-D-manno-heptose 7-phosphate: step 1/4. The protein operates within nucleotide-sugar biosynthesis; ADP-L-glycero-beta-D-manno-heptose biosynthesis; ADP-L-glycero-beta-D-manno-heptose from D-glycero-beta-D-manno-heptose 7-phosphate: step 3/4. It participates in bacterial outer membrane biogenesis; LPS core biosynthesis. Catalyzes the phosphorylation of D-glycero-D-manno-heptose 7-phosphate at the C-1 position to selectively form D-glycero-beta-D-manno-heptose-1,7-bisphosphate. Its function is as follows. Catalyzes the ADP transfer from ATP to D-glycero-beta-D-manno-heptose 1-phosphate, yielding ADP-D-glycero-beta-D-manno-heptose. This is Bifunctional protein HldE from Vibrio vulnificus (strain YJ016).